The sequence spans 85 residues: Large ribosomal subunit protein bL27 (85 aa).

Residues 1–24 form a disordered region; that stretch reads MAHKKGVGSSRNGRDSDGQRLGCK.

This sequence belongs to the bacterial ribosomal protein bL27 family.

This chain is Large ribosomal subunit protein bL27, found in Geotalea daltonii (strain DSM 22248 / JCM 15807 / FRC-32) (Geobacter daltonii).